The sequence spans 705 residues: MNKKKKYVHTKQFNSHDCGLACISSILKFHNLNYGIDFLLDLIGDKEGYSLRDLIVIFKKMGIKTRPLELQENKTFEALKQIKLPCIALLEGEEYGHYITIYEIRNNYLLVSDPDKDKITKIKKEDFESKFTNFILEIDKESIPEKEKDQKKHSYFFKDILFRNKLIVFVILLTSLFVVGLAVAGSFYIKFLVDLIIPRSLRESLITITLIFISMVLIRCIFDFVRSYLIIKLSYKVDKEMSNVYFNKVTKLPINFFENREDGEVISRFNDGIYIKDFFSANFVTAIIDIILILGLGVILYRTNNILFLTIILPILLLSCLAILFFDHLKKKNQKLMEDKAKSTSLLINFLKNMTTVYSLNKTSFFLEKFHLTYDKQLNSTFSVAKAVISNEILKGLIQNSFTIIILWVGTRQVLNDSMSLGTLLFINTLAAFLLSSLDRILSMQSDLQQAHVASIRFFDVVNYPVQQDSNENLTELDFIQNIKTVNLNIGADPMRYIVEDINLILDRKDKVLIIGESGTGKSTFAKSLSKLYKVPDKSIYLNGLDINRYDHLSIRKRIVYIDENPFLFKGTIKENLCMGEIFDQNEIENACIMSQCHEFICNLDKQYSYKLSENGSNLSTGQKQRLALARAILHQPQVLILDESLSNIDPDNTKLIYETLHRMDCLIILITHNDPSNFKYNKKLVFRNNRIIESSYSENKEYSI.

Positions 12-138 (QFNSHDCGLA…SKFTNFILEI (127 aa)) constitute a Peptidase C39 domain. Cys-18 is an active-site residue. 6 helical membrane passes run 167–187 (IVFV…AGSF), 205–225 (LITI…FDFV), 281–301 (ANFV…VILY), 306–326 (ILFL…ILFF), 388–408 (VISN…IILW), and 418–438 (SMSL…LSSL). In terms of domain architecture, ABC transmembrane type-1 spans 168–450 (VFVILLTSLF…ILSMQSDLQQ (283 aa)). Positions 483 to 705 (IKTVNLNIGA…SYSENKEYSI (223 aa)) constitute an ABC transporter domain. 516–523 (GESGTGKS) is a binding site for ATP.

This sequence belongs to the ABC transporter superfamily. SunT family. In terms of assembly, homodimer.

It is found in the cell membrane. Functionally, sunT (TC 3.A.1.112.4) is required for production of the lantibiotic sublancin-168, probably by both processing the signal peptide and exporting the resulting mature lantibiotic. The polypeptide is SPbeta prophage-derived sublancin-168-processing and transport ATP-binding protein SunT (sunT) (Bacillus subtilis (strain 168)).